The following is a 299-amino-acid chain: NAD kinase (299 aa).

Residue aspartate 71 is the Proton acceptor of the active site. NAD(+) contacts are provided by residues 71–72 (DG), 145–146 (ND), arginine 173, aspartate 175, 186–191 (TAYALS), alanine 210, and glutamine 248.

It belongs to the NAD kinase family. The cofactor is a divalent metal cation.

The protein resides in the cytoplasm. It catalyses the reaction NAD(+) + ATP = ADP + NADP(+) + H(+). Its function is as follows. Involved in the regulation of the intracellular balance of NAD and NADP, and is a key enzyme in the biosynthesis of NADP. Catalyzes specifically the phosphorylation on 2'-hydroxyl of the adenosine moiety of NAD to yield NADP. The sequence is that of NAD kinase from Bordetella avium (strain 197N).